Consider the following 390-residue polypeptide: Formamidopyrimidine-DNA glycosylase (390 aa).

Residue P2 is the Schiff-base intermediate with DNA of the active site. E3 functions as the Proton donor in the catalytic mechanism. K60 acts as the Proton donor; for beta-elimination activity in catalysis. Residues Y107, R126, K167, and N186 each coordinate DNA. A disordered region spans residues A283 to S390. Residues D301 to D316 show a composition bias toward acidic residues. The span at S321 to S337 shows a compositional bias: basic residues. The segment covering E343–E355 has biased composition (acidic residues). The segment covering P360–K370 has biased composition (basic residues).

This sequence belongs to the FPG family. As to quaternary structure, monomer. As to expression, expressed in leaves (at protein levels).

The protein resides in the nucleus. The catalysed reaction is Hydrolysis of DNA containing ring-opened 7-methylguanine residues, releasing 2,6-diamino-4-hydroxy-5-(N-methyl)formamidopyrimidine.. It carries out the reaction 2'-deoxyribonucleotide-(2'-deoxyribose 5'-phosphate)-2'-deoxyribonucleotide-DNA = a 3'-end 2'-deoxyribonucleotide-(2,3-dehydro-2,3-deoxyribose 5'-phosphate)-DNA + a 5'-end 5'-phospho-2'-deoxyribonucleoside-DNA + H(+). In terms of biological role, involved in base excision repair of DNA damaged by oxidation or by mutagenic agents. Acts as a DNA glycosylase that recognizes and removes damaged bases. Can process efficiently 4,6-diamino-5-formamidopyrimidine (FapyA), 2,6-diamino-4- hydroxy-5-formamidopyrimidine (FapyG) and the further oxidation products of 8-oxoguanine (8-oxoG), such as guanidinohydantoin and spiroiminodihydantoin. Has marginal activity towards 8-oxoG. Has AP (apurinic/apyrimidinic) lyase activity. Cleaves the DNA backbone by beta-delta elimination to generate a single-strand break at the site of the removed base with both 3'- and 5'-phosphates. The sequence is that of Formamidopyrimidine-DNA glycosylase (FPG1) from Arabidopsis thaliana (Mouse-ear cress).